The chain runs to 71 residues: Small ribosomal subunit protein bS21 (71 aa).

Belongs to the bacterial ribosomal protein bS21 family.

The chain is Small ribosomal subunit protein bS21 from Photobacterium profundum (strain SS9).